Reading from the N-terminus, the 72-residue chain is MAKEGAIEVEGRIVEPLPNAMFRVELDNGHKVLAHISGKMRQHYIRILPEDRVVVELSPYDLTRGRIVYRYK.

The S1-like domain maps to 1 to 72 (MAKEGAIEVE…TRGRIVYRYK (72 aa)).

This sequence belongs to the IF-1 family. As to quaternary structure, component of the 30S ribosomal translation pre-initiation complex which assembles on the 30S ribosome in the order IF-2 and IF-3, IF-1 and N-formylmethionyl-tRNA(fMet); mRNA recruitment can occur at any time during PIC assembly.

Its subcellular location is the cytoplasm. One of the essential components for the initiation of protein synthesis. Stabilizes the binding of IF-2 and IF-3 on the 30S subunit to which N-formylmethionyl-tRNA(fMet) subsequently binds. Helps modulate mRNA selection, yielding the 30S pre-initiation complex (PIC). Upon addition of the 50S ribosomal subunit IF-1, IF-2 and IF-3 are released leaving the mature 70S translation initiation complex. This is Translation initiation factor IF-1 from Corynebacterium glutamicum (strain R).